The following is a 405-amino-acid chain: Multi-drug resistance efflux pump PmrA homolog (405 aa).

12 helical membrane-spanning segments follow: residues 13–33 (LFIT…VMPF), 50–70 (LYSG…APIW), 88–108 (IVMT…WLLG), 111–131 (LLMG…ASQA), 147–167 (MVSG…WFGM), 170–190 (VFLI…FFVH), 216–236 (ILFG…SIEP), 254–274 (FISG…SSFL), 286–306 (LILI…FVQS), 308–328 (LQLG…TPSV), 350–370 (MCSN…AGYI), and 374–394 (AAIV…FINF).

The protein belongs to the major facilitator superfamily. TCR/Tet family.

The protein localises to the cell membrane. Efflux pump for various substrates. The protein is Multi-drug resistance efflux pump PmrA homolog (pmrA) of Lactococcus lactis subsp. lactis (strain IL1403) (Streptococcus lactis).